The sequence spans 273 residues: DnaJ homolog subfamily C member 27 (273 aa).

The required for interaction with MAPK1 stretch occupies residues 1–18; that stretch reads METNVPKRKEPAKSLRIK. Residues 23–30, 71–75, and 134–137 each bind GTP; these read GNAEVGKS, DMAGH, and NKID. Residues 217 to 273 enclose the J domain; that stretch reads DSWEMLGVRPGASREEVNKAYRKLAVLLHPDKCVAPGSEDAFKAVVNARTALLKNIK.

Belongs to the small GTPase superfamily. Rab family. In terms of assembly, interacts directly with MAPK1 (wild-type and kinase-deficient forms). Interacts directly (in GTP-bound form) with MAP2K1 (wild-type and kinase-deficient forms).

The protein localises to the nucleus. Functionally, GTPase which can activate the MEK/ERK pathway and induce cell transformation when overexpressed. May act as a nuclear scaffold for MAPK1, probably by association with MAPK1 nuclear export signal leading to enhanced ERK1/ERK2 signaling. In Mus musculus (Mouse), this protein is DnaJ homolog subfamily C member 27 (Dnajc27).